A 258-amino-acid polypeptide reads, in one-letter code: MMNPLIIKLGGVLLDSEEALERLFSALVNYRESHQRPLVIVHGGGCVVDELMKGLNLPVKKKNGLRVTPADQIDIITGALAGTANKTLLAWAKKHQIAAVGLFLGDGDSVKVTQLDEELGHVGLAQPGSPKLINSLLENGYLPVVSSIGVTDEGQLMNVNADQAATALAATLGADLILLSDVSGILDGKGQRIAEMTAAKAEQLIEQGIITDGMIVKVNAALDAARTLGRPVDIASWRHAEQLPALFNGMPMGTRILA.

Substrate-binding positions include 44–45 (GG), R66, and N158. Residues 181–186 (DVSGIL) and 209–211 (IIT) contribute to the ATP site.

It belongs to the acetylglutamate kinase family. ArgB subfamily. As to quaternary structure, homodimer.

Its subcellular location is the cytoplasm. It catalyses the reaction N-acetyl-L-glutamate + ATP = N-acetyl-L-glutamyl 5-phosphate + ADP. It functions in the pathway amino-acid biosynthesis; L-arginine biosynthesis; N(2)-acetyl-L-ornithine from L-glutamate: step 2/4. Catalyzes the ATP-dependent phosphorylation of N-acetyl-L-glutamate. The protein is Acetylglutamate kinase of Escherichia coli O157:H7.